The chain runs to 122 residues: Large ribosomal subunit protein uL14 (122 aa).

This sequence belongs to the universal ribosomal protein uL14 family. As to quaternary structure, part of the 50S ribosomal subunit. Forms a cluster with proteins L3 and L19. In the 70S ribosome, L14 and L19 interact and together make contacts with the 16S rRNA in bridges B5 and B8.

Binds to 23S rRNA. Forms part of two intersubunit bridges in the 70S ribosome. The polypeptide is Large ribosomal subunit protein uL14 (Mycobacteroides abscessus (strain ATCC 19977 / DSM 44196 / CCUG 20993 / CIP 104536 / JCM 13569 / NCTC 13031 / TMC 1543 / L948) (Mycobacterium abscessus)).